We begin with the raw amino-acid sequence, 473 residues long: Ribulose bisphosphate carboxylase large chain 2 (473 aa).

Residues asparagine 116 and threonine 166 each contribute to the substrate site. Lysine 168 serves as the catalytic Proton acceptor. Position 170 (lysine 170) interacts with substrate. Positions 194, 196, and 197 each coordinate Mg(2+). The residue at position 194 (lysine 194) is an N6-carboxylysine. The Proton acceptor role is filled by histidine 287. The substrate site is built by arginine 288, histidine 320, and serine 372.

It belongs to the RuBisCO large chain family. Type I subfamily. Heterohexadecamer of 8 large chains and 8 small chains. The cofactor is Mg(2+).

It carries out the reaction 2 (2R)-3-phosphoglycerate + 2 H(+) = D-ribulose 1,5-bisphosphate + CO2 + H2O. The catalysed reaction is D-ribulose 1,5-bisphosphate + O2 = 2-phosphoglycolate + (2R)-3-phosphoglycerate + 2 H(+). RuBisCO catalyzes two reactions: the carboxylation of D-ribulose 1,5-bisphosphate, the primary event in carbon dioxide fixation, as well as the oxidative fragmentation of the pentose substrate. Both reactions occur simultaneously and in competition at the same active site. In Acidithiobacillus ferrooxidans (strain ATCC 23270 / DSM 14882 / CIP 104768 / NCIMB 8455) (Ferrobacillus ferrooxidans (strain ATCC 23270)), this protein is Ribulose bisphosphate carboxylase large chain 2.